A 478-amino-acid chain; its full sequence is UDP-glycosyltransferase 71B5 (478 aa).

UDP-alpha-D-glucose contacts are provided by residues Ser-280, 347-349 (APQ), 364-372 (HCGWNSILE), and 386-389 (YAEQ).

This sequence belongs to the UDP-glycosyltransferase family.

Possesses low quercetin 3-O-glucosyltransferase activity in vitro. This Arabidopsis thaliana (Mouse-ear cress) protein is UDP-glycosyltransferase 71B5 (UGT71B5).